A 541-amino-acid polypeptide reads, in one-letter code: Testis-specific chromodomain protein Y 2 (541 aa).

The 61-residue stretch at 6–66 folds into the Chromo domain; sequence FEVEAIVDKR…RQTEKQKKLT (61 aa). The tract at residues 72–104 is disordered; it reads RIFSNNARRRTSRSTKANYSKNSPKTPVTDKHH. Positions 87–97 are enriched in polar residues; it reads KANYSKNSPKT.

As to expression, testis specific.

It is found in the nucleus. The catalysed reaction is L-lysyl-[protein] + acetyl-CoA = N(6)-acetyl-L-lysyl-[protein] + CoA + H(+). In terms of biological role, may have histone acetyltransferase activity. In Homo sapiens (Human), this protein is Testis-specific chromodomain protein Y 2 (CDY2A).